We begin with the raw amino-acid sequence, 277 residues long: Putative envelope-preserving system protein Rv2742c (277 aa).

The span at 31 to 54 (RDENRQRHAQVDVQRRRDQPERGQ) shows a compositional bias: basic and acidic residues. 3 disordered regions span residues 31–70 (RDENRQRHAQVDVQRRRDQPERGQHQHRRNRDADHHPDGR), 113–133 (QGSPRRRERRRGQTAHQRLGR), and 180–210 (RQGSGRRGLGSRSGAGVPQGADARGWRHTAD). The segment covering 116-133 (PRRRERRRGQTAHQRLGR) has biased composition (basic residues).

Interacts with Rv2743c.

In terms of biological role, involved in preservation of envelope integrity and tolerance to surface stress. Reverses the inhibitory effect of PspA on ClgR activity. Facilitates intracellular growth of M.tuberculosis. This Mycobacterium tuberculosis (strain ATCC 25618 / H37Rv) protein is Putative envelope-preserving system protein Rv2742c.